The chain runs to 151 residues: Protein Turandot Z (151 aa).

Positions 1–23 are cleaved as a signal peptide; it reads MSRLIHLSFVLALLACLTGPISA.

It belongs to the Turandot family.

It is found in the secreted. Functionally, a humoral factor that may play a role in stress tolerance. In Drosophila pseudoobscura pseudoobscura (Fruit fly), this protein is Protein Turandot Z.